The chain runs to 234 residues: Orotidine 5'-phosphate decarboxylase (234 aa).

Substrate contacts are provided by residues D11, K33, 60–69, T120, R181, Q190, G210, and R211; that span reads DLKFHDIPNT. K62 serves as the catalytic Proton donor.

The protein belongs to the OMP decarboxylase family. Type 1 subfamily. Homodimer.

It catalyses the reaction orotidine 5'-phosphate + H(+) = UMP + CO2. Its pathway is pyrimidine metabolism; UMP biosynthesis via de novo pathway; UMP from orotate: step 2/2. Functionally, catalyzes the decarboxylation of orotidine 5'-monophosphate (OMP) to uridine 5'-monophosphate (UMP). The protein is Orotidine 5'-phosphate decarboxylase of Shewanella sediminis (strain HAW-EB3).